Reading from the N-terminus, the 557-residue chain is Urocanate hydratase (557 aa).

Residues 1 to 20 (MSNPRHNEREVRSPRGDELN) form a disordered region. Residues 52–53 (GG), Q130, 176–178 (GMG), E196, R201, 242–243 (NA), 263–267 (QTSAH), 273–274 (YL), and Y322 contribute to the NAD(+) site. C410 is an active-site residue. An NAD(+)-binding site is contributed by G492.

This sequence belongs to the urocanase family. Requires NAD(+) as cofactor.

Its subcellular location is the cytoplasm. The enzyme catalyses 4-imidazolone-5-propanoate = trans-urocanate + H2O. Its pathway is amino-acid degradation; L-histidine degradation into L-glutamate; N-formimidoyl-L-glutamate from L-histidine: step 2/3. Catalyzes the conversion of urocanate to 4-imidazolone-5-propionate. In Brucella abortus (strain S19), this protein is Urocanate hydratase.